The primary structure comprises 323 residues: o-succinylbenzoate synthase (323 aa).

Residue Lys-134 is the Proton donor of the active site. Mg(2+) is bound by residues Asp-162, Glu-191, and Asp-214. Lys-236 functions as the Proton acceptor in the catalytic mechanism.

This sequence belongs to the mandelate racemase/muconate lactonizing enzyme family. MenC type 1 subfamily. A divalent metal cation is required as a cofactor.

It catalyses the reaction (1R,6R)-6-hydroxy-2-succinyl-cyclohexa-2,4-diene-1-carboxylate = 2-succinylbenzoate + H2O. Its pathway is quinol/quinone metabolism; 1,4-dihydroxy-2-naphthoate biosynthesis; 1,4-dihydroxy-2-naphthoate from chorismate: step 4/7. It functions in the pathway quinol/quinone metabolism; menaquinone biosynthesis. In terms of biological role, converts 2-succinyl-6-hydroxy-2,4-cyclohexadiene-1-carboxylate (SHCHC) to 2-succinylbenzoate (OSB). The polypeptide is o-succinylbenzoate synthase (Proteus mirabilis (strain HI4320)).